We begin with the raw amino-acid sequence, 254 residues long: UPF0246 protein CPE2152 (254 aa).

The protein belongs to the UPF0246 family.

The polypeptide is UPF0246 protein CPE2152 (Clostridium perfringens (strain 13 / Type A)).